The chain runs to 1028 residues: Contactin-3 (1028 aa).

The signal sequence occupies residues 1-19 (MMLSWKQLILLSFIGCLAG). 6 consecutive Ig-like C2-type domains span residues 26-117 (PVFV…AKLQ), 122-208 (ENFK…ARVL), 227-313 (PKIE…GRLT), 318-402 (PYWV…AELK), 408-497 (PDFS…LVVT), and 499-593 (PTRI…AELI). 5 disulfides stabilise this stretch: C50-C100, C144-C196, C249-C297, C339-C386, and C431-C479. N-linked (GlcNAc...) asparagine glycans are attached at residues N65 and N193. N377, N468, N489, and N538 each carry an N-linked (GlcNAc...) asparagine glycan. C521 and C577 are oxidised to a cystine. Fibronectin type-III domains follow at residues 600-698 (PPEN…TEEA), 703-800 (APSE…SAEE), 805-901 (APSH…TKKT), and 902-998 (PPSQ…TSMD). The segment at 684 to 714 (GEPSLPSEKVRTEEAAPEVAPSEVSGGGGSR) is disordered. N765, N860, N895, N913, N931, and N956 each carry an N-linked (GlcNAc...) asparagine glycan. Residue S1002 is the site of GPI-anchor amidated serine attachment. Residues 1003–1028 (TSAISDIHPVSGYISVLLFFIVNALW) constitute a propeptide, removed in mature form.

The protein belongs to the immunoglobulin superfamily. Contactin family. As to quaternary structure, interacts with PTPRG. As to expression, specifically expressed in brain. Not expressed in peripheral tissues such as heart, lung, liver, spleen, kidney and skeletal muscle. In brain, it is restricted to subsets of neurons such as Purkinje cells of the cerebellum, granule cells of the dentate gyrus, and neurons in the superficial layers of the cerebral cortex.

The protein localises to the cell membrane. In terms of biological role, contactins mediate cell surface interactions during nervous system development. Has some neurite outgrowth-promoting activity. In Rattus norvegicus (Rat), this protein is Contactin-3 (Cntn3).